A 413-amino-acid polypeptide reads, in one-letter code: Zinc finger CCCH domain-containing protein 6 (413 aa).

3 disordered regions span residues 28 to 61 (PSQVGSESQDHLQAKSPLASHPSDDNLPPGFGGP), 159 to 191 (DSASDFPTQSGVDVGTEPSITDENTSTSSTLPA), and 333 to 356 (QPGGGPNPEMVNSSNNNQRPRDSK). Over residues 176–189 (PSITDENTSTSSTL) the composition is skewed to polar residues. A C3H1-type zinc finger spans residues 357–385 (PKIMKACMYFNSARGCRHGANCMYQHDAT). Positions 389-403 (PRNLNNGNINTSDMQ) are enriched in polar residues. A disordered region spans residues 389-413 (PRNLNNGNINTSDMQNAKRMRFDRD).

This is Zinc finger CCCH domain-containing protein 6 from Arabidopsis thaliana (Mouse-ear cress).